The following is a 95-amino-acid chain: Large ribosomal subunit protein uL23 (95 aa).

The protein belongs to the universal ribosomal protein uL23 family. Part of the 50S ribosomal subunit. Contacts protein L29, and trigger factor when it is bound to the ribosome.

In terms of biological role, one of the early assembly proteins it binds 23S rRNA. One of the proteins that surrounds the polypeptide exit tunnel on the outside of the ribosome. Forms the main docking site for trigger factor binding to the ribosome. This chain is Large ribosomal subunit protein uL23, found in Fusobacterium nucleatum subsp. nucleatum (strain ATCC 25586 / DSM 15643 / BCRC 10681 / CIP 101130 / JCM 8532 / KCTC 2640 / LMG 13131 / VPI 4355).